Here is an 835-residue protein sequence, read N- to C-terminus: Protein translocase subunit SecA (835 aa).

Residues Gln-85, 103 to 107, and Asp-492 contribute to the ATP site; that span reads GEGKT. Residues 788–807 are disordered; the sequence is VQGEAVHPSSDGEEAKKKPV. 4 residues coordinate Zn(2+): Cys-819, Cys-821, Cys-830, and Cys-831.

It belongs to the SecA family. As to quaternary structure, monomer and homodimer. Part of the essential Sec protein translocation apparatus which comprises SecA, SecYEG and auxiliary proteins SecDF. Other proteins may also be involved. Zn(2+) serves as cofactor.

Its subcellular location is the cell membrane. The protein resides in the cytoplasm. It carries out the reaction ATP + H2O + cellular proteinSide 1 = ADP + phosphate + cellular proteinSide 2.. Functionally, part of the Sec protein translocase complex. Interacts with the SecYEG preprotein conducting channel. Has a central role in coupling the hydrolysis of ATP to the transfer of proteins into and across the cell membrane, serving as an ATP-driven molecular motor driving the stepwise translocation of polypeptide chains across the membrane. The polypeptide is Protein translocase subunit SecA (Bacillus cereus (strain ATCC 14579 / DSM 31 / CCUG 7414 / JCM 2152 / NBRC 15305 / NCIMB 9373 / NCTC 2599 / NRRL B-3711)).